The chain runs to 199 residues: CASP-like protein 4B1 (199 aa).

Residues 1–32 (MAMVASPDDIVKSPLPPPPPPPPPPLPPAHKD) form a disordered region. The Cytoplasmic segment spans residues 1-53 (MAMVASPDDIVKSPLPPPPPPPPPPLPPAHKDKAAYNPYSGCPAHGGDDGLDG). Pro residues predominate over residues 14 to 28 (PLPPPPPPPPPPLPP). Residues 54–74 (IVLVLRAAAALLALVAMALVA) form a helical membrane-spanning segment. The Extracellular segment spans residues 75–91 (SCRHGDWMEFTRYQEYR). A helical transmembrane segment spans residues 92-112 (YLLGVAVVASLYSALQAARTF). Over 113 to 127 (RRMRAGTAYAATFLD) the chain is Cytoplasmic. Residues 128 to 148 (FAGDQAVGYLLITASSAALPI) traverse the membrane as a helical segment. The Extracellular segment spans residues 149–163 (TIRMRSAVVNTFTDV). The chain crosses the membrane as a helical span at residues 164-184 (VAASISFAFLAFAALAFSALI). At 185 to 199 (AGFRLSSSSSSAYNY) the chain is on the cytoplasmic side.

The protein belongs to the Casparian strip membrane proteins (CASP) family. Homodimer and heterodimers.

It localises to the cell membrane. This Oryza sativa subsp. japonica (Rice) protein is CASP-like protein 4B1.